A 72-amino-acid polypeptide reads, in one-letter code: Kappa-conotoxin PVIIA (72 aa).

An N-terminal signal peptide occupies residues 1-22 (MKLTCVVIVVVLFLTACQLITA). Residues 23-45 (DDSRRTQKHRALRSTTKLSLSTR) constitute a propeptide that is removed on maturation. 3 cysteine pairs are disulfide-bonded: Cys46–Cys61, Cys53–Cys65, and Cys60–Cys71. Pro49 carries the post-translational modification 4-hydroxyproline.

This sequence belongs to the conotoxin O1 superfamily. This toxin is not amidated at the C-terminal Val residue. As to expression, expressed by the venom duct.

The protein resides in the secreted. In terms of biological role, kappa-conotoxins bind and inhibit voltage-gated potassium channels (Kv). This toxin inhibits the drosophila Shaker channel (IC(50)=57-80 nM). In vivo, when tested in fish, this toxin induces hyperactivity, followed by continuous contraction and extension of major fins, without immobilization or death. Injection of this peptide together with the delta-conotoxin PVIA causes the sudden tetanus of prey (STOP) syndrome, which is a single, lethal 'fin-pop' in envenomed fish. When tested in mice, induces hyperactivity. This is Kappa-conotoxin PVIIA from Conus purpurascens (Purple cone).